The sequence spans 241 residues: Glutamate/aspartate import ATP-binding protein GltL (241 aa).

In terms of domain architecture, ABC transporter spans 2-236 (ITLKNVSKWY…PKSDRAKDFL (235 aa)). Position 34 to 41 (34 to 41 (GPSGSGKS)) interacts with ATP.

This sequence belongs to the ABC transporter superfamily. The complex is composed of two ATP-binding proteins (GltL), two transmembrane proteins (GltJ and GltK) and a solute-binding protein (GltI).

Its subcellular location is the cell inner membrane. The catalysed reaction is a polar amino acid(out) + ATP + H2O = a polar amino acid(in) + ADP + phosphate + H(+). It catalyses the reaction L-glutamate(out) + ATP + H2O = L-glutamate(in) + ADP + phosphate + H(+). The enzyme catalyses L-aspartate(out) + ATP + H2O = L-aspartate(in) + ADP + phosphate + H(+). Its function is as follows. Part of the ABC transporter complex GltIJKL involved in glutamate and aspartate uptake. Probably responsible for energy coupling to the transport system. The polypeptide is Glutamate/aspartate import ATP-binding protein GltL (gltL) (Escherichia coli O157:H7).